Consider the following 342-residue polypeptide: Ion-translocating oxidoreductase complex subunit D (342 aa).

Helical transmembrane passes span 42 to 62, 68 to 90, and 124 to 144; these read GSVINVLWAVIVALVSEALFL, NIAFYLKDYSAVVTAVLLGLALP, and AMVGYVLLLISFPVAMTQWLA. Residue T171 is modified to FMN phosphoryl threonine. Helical transmembrane passes span 200 to 220, 227 to 247, 252 to 272, 286 to 306, and 308 to 328; these read FAGLGWEWVNLAFLLGGLYLI, WHIPAGFLAGLGLPALLAWLI, FADPLFQLFSGGAMLGAFFIA, LVYALLIGVLIWVIRTFGGYP, and AVAFSVLLLNLSAPFIDYYTQ.

Belongs to the NqrB/RnfD family. As to quaternary structure, the complex is composed of six subunits: RnfA, RnfB, RnfC, RnfD, RnfE and RnfG. The cofactor is FMN.

It is found in the cell inner membrane. Functionally, part of a membrane-bound complex that couples electron transfer with translocation of ions across the membrane. In Alcanivorax borkumensis (strain ATCC 700651 / DSM 11573 / NCIMB 13689 / SK2), this protein is Ion-translocating oxidoreductase complex subunit D.